Consider the following 552-residue polypeptide: FACT complex subunit POB3 (552 aa).

Positions 190–205 (KKEESSNEVVPKKEDG) are enriched in basic and acidic residues. 2 disordered regions span residues 190–209 (KKEE…AEGE) and 484–552 (QTAL…PKVE). Acidic residues predominate over residues 490–529 (DSDEEDINMGSAGEDDESVDEDFQVSSDNDADEVAEEFDS). The segment covering 541 to 552 (DEERPSKKPKVE) has biased composition (basic and acidic residues).

It belongs to the SSRP1 family. Forms a stable heterodimer with SPT16. The SPT16-POB3 dimer weakly associates with multiple molecules of NHP6 (NHP6A or NHP6B) to form the FACT (yFACT or SNP) complex. The FACT complex interacts with the CK2 (casein kinase II) complex subunits CKA1, CKA2, CKB1 and CKB2 and the components of the transcription machinery CHD1, CTR9, PAF1 and CDC73. The FACT complex interacts with the PAF1 complex. SPT16 interacts with SAS3 and POL1. Interacts directly with RFA1.

The protein localises to the nucleus. Its subcellular location is the chromosome. Functionally, component of the FACT complex, a general chromatin factor that acts to reorganize nucleosomes. The FACT complex is involved in multiple processes that require DNA as a template such as mRNA elongation, DNA replication and DNA repair. During transcription elongation the FACT complex acts as a histone chaperone that both destabilizes and restores nucleosomal structure. It facilitates the passage of RNA polymerase II and transcription by promoting the dissociation of one histone H2A-H2B dimer from the nucleosome, then subsequently promotes the reestablishment of the nucleosome following the passage of RNA polymerase II. Transcription elongation is promoted by the repression of transcription initiation from cryptic sites. Also acts in establishing transcription initiation complexes and promotes SPT15/TBP-binding to a TATA box. Together with replication factor-A protein (RPA), FACT may play a role in nucleosome deposition during DNA replication. The protein is FACT complex subunit POB3 (POB3) of Saccharomyces cerevisiae (strain ATCC 204508 / S288c) (Baker's yeast).